The chain runs to 311 residues: Probable protein phosphatase 2C 59 (311 aa).

Residues 1–14 show a composition bias toward low complexity; that stretch reads MGYLNSVLSSSSQV. Residues 1 to 26 are disordered; sequence MGYLNSVLSSSSQVHSDDGPVSGGGL. The 247-residue stretch at 33-279 folds into the PPM-type phosphatase domain; the sequence is SYGYASSPGK…DNITCVVVRF (247 aa). The Mn(2+) site is built by Asp69, Gly70, Asp231, and Asp270.

Belongs to the PP2C family. In terms of assembly, interacts with the Pseudomonas syringae pv. maculicola effector HopW1-1 (via C-terminus). The cofactor is Mg(2+). Mn(2+) serves as cofactor.

The enzyme catalyses O-phospho-L-seryl-[protein] + H2O = L-seryl-[protein] + phosphate. The catalysed reaction is O-phospho-L-threonyl-[protein] + H2O = L-threonyl-[protein] + phosphate. Inhibited by sodium fluoride (NaF). Protein phosphatase that modulates defense response to pathogenic bacteria, conferring resistance and promoting salicylic acid (SA) accumulation. The chain is Probable protein phosphatase 2C 59 (WIN2) from Arabidopsis thaliana (Mouse-ear cress).